A 510-amino-acid polypeptide reads, in one-letter code: Probable sphingolipid transporter spinster homolog 3 (510 aa).

A helical transmembrane segment spans residues 44–64 (SSLSPVWLLVIFCIINLLNYM). N-linked (GlcNAc...) asparagine glycosylation is found at Asn-75 and Asn-98. 11 helical membrane-spanning segments follow: residues 106-126 (VLSS…ASLA), 136-156 (VWTI…IVLC), 158-178 (MFVG…IDDN), 185-205 (AAWL…GYVY), 219-239 (FWGE…MKPL), 298-318 (VFVV…AYSY), 336-356 (IFGA…GFIL), 369-387 (LLSG…AFTL), 392-414 (GFIA…VNYV), 430-450 (ISTV…VGIV), and 462-482 (LILT…KINL).

Belongs to the major facilitator superfamily. Spinster (TC 2.A.1.49) family.

Its subcellular location is the mitochondrion inner membrane. Functionally, probable sphingolipid transporter. The chain is Probable sphingolipid transporter spinster homolog 3 from Arabidopsis thaliana (Mouse-ear cress).